Consider the following 971-residue polypeptide: Zinc finger CCCH domain-containing protein 7A (971 aa).

3 TPR repeats span residues 43–76, 89–122, and 124–156; these read VRNLFNEGNDVYREHDWNNSISQYTEALNIADYA, EKLYINRIACYSNMGFHDKVLEDCNIVLSLNASN, and KALYRKSKALSDLGRYKKAYDAVAKCSLAVPQD. Thr-210 is subject to Phosphothreonine. 2 C3H1-type zinc fingers span residues 634–656 and 769–797; these read LCRHEVRYGCLREDECFYAHSLV and PLQFDLCNHIASGKKCQYVGNCSFAHSPE. The C2H2-type zinc-finger motif lies at 857 to 881; it reads FHCWMCGKNCNSEKQWQGHISSEKH. The segment at 906 to 928 adopts a C3H1-type 3 zinc-finger fold; sequence ICDRYMNGTCPEGNSCKFAHGNA. Positions 924–952 form a coiled coil; sequence AHGNAELHEWEERRDALKMKLNKARKDHL.

The protein resides in the nucleus. Functionally, may be a specific regulator of miRNA biogenesis. Binds to microRNAs MIR7-1, MIR16-2 and MIR29A hairpins recognizing the 3'-ATA(A/T)-5' motif in the apical loop. In Homo sapiens (Human), this protein is Zinc finger CCCH domain-containing protein 7A (ZC3H7A).